A 439-amino-acid chain; its full sequence is Glutamine synthetase (439 aa).

In terms of domain architecture, GS beta-grasp spans 12 to 93 (SKIKFVQLVF…VYGFIYKDNK (82 aa)). The region spanning 99–439 (PRGILKRALE…EWELERYFFL (341 aa)) is the GS catalytic domain. Mg(2+)-binding residues include glutamate 122 and glutamate 124. Residue glutamate 172 coordinates ATP. The Mg(2+) site is built by glutamate 177 and glutamate 184. An L-glutamate-binding site is contributed by glycine 229. Histidine 233 lines the Mg(2+) pocket. Residues 235–237 (HIS) and serine 237 each bind ATP. L-glutamate contacts are provided by arginine 283, glutamate 289, and arginine 301. Arginine 301, arginine 306, and lysine 313 together coordinate ATP. Glutamate 318 is a binding site for Mg(2+). Arginine 320 serves as a coordination point for L-glutamate.

It belongs to the glutamine synthetase family. As to quaternary structure, oligomer of 12 subunits arranged in the form of two hexagons. Mg(2+) is required as a cofactor.

Its subcellular location is the cytoplasm. The enzyme catalyses L-glutamate + NH4(+) + ATP = L-glutamine + ADP + phosphate + H(+). In terms of biological role, probably involved in nitrogen metabolism via ammonium assimilation. Catalyzes the ATP-dependent biosynthesis of glutamine from glutamate and ammonia. The polypeptide is Glutamine synthetase (Pyrococcus furiosus (strain ATCC 43587 / DSM 3638 / JCM 8422 / Vc1)).